The following is a 541-amino-acid chain: Malate synthase (541 aa).

R172 serves as the catalytic Proton acceptor. D452 (proton donor) is an active-site residue.

This sequence belongs to the malate synthase family.

Its subcellular location is the cytoplasm. It catalyses the reaction glyoxylate + acetyl-CoA + H2O = (S)-malate + CoA + H(+). The protein operates within carbohydrate metabolism; glyoxylate cycle; (S)-malate from isocitrate: step 2/2. The protein is Malate synthase (mls) of Myxococcus xanthus (strain DK1622).